Consider the following 387-residue polypeptide: Cysteine desulfurase IscS (387 aa).

Residues 73–74, asparagine 155, glutamine 183, and 203–205 contribute to the pyridoxal 5'-phosphate site; these read AT and SAH. Lysine 206 bears the N6-(pyridoxal phosphate)lysine mark. Threonine 241 lines the pyridoxal 5'-phosphate pocket. Cysteine 328 functions as the Cysteine persulfide intermediate in the catalytic mechanism. Cysteine 328 contributes to the [2Fe-2S] cluster binding site.

This sequence belongs to the class-V pyridoxal-phosphate-dependent aminotransferase family. NifS/IscS subfamily. In terms of assembly, homodimer. Forms a heterotetramer with IscU, interacts with other sulfur acceptors. Pyridoxal 5'-phosphate serves as cofactor.

It is found in the cytoplasm. It carries out the reaction (sulfur carrier)-H + L-cysteine = (sulfur carrier)-SH + L-alanine. It functions in the pathway cofactor biosynthesis; iron-sulfur cluster biosynthesis. Its function is as follows. Master enzyme that delivers sulfur to a number of partners involved in Fe-S cluster assembly, tRNA modification or cofactor biosynthesis. Catalyzes the removal of elemental sulfur atoms from cysteine to produce alanine. Functions as a sulfur delivery protein for Fe-S cluster synthesis onto IscU, an Fe-S scaffold assembly protein, as well as other S acceptor proteins. This chain is Cysteine desulfurase IscS, found in Helicobacter pylori (strain J99 / ATCC 700824) (Campylobacter pylori J99).